The following is a 208-amino-acid chain: Large ribosomal subunit protein bL25 (208 aa).

Positions 163 to 208 are disordered; that stretch reads DYSYNHEPDEVVASILPPQKQEETEAESAAQDVEEPEKGTEEEKEE. A compositionally biased stretch (basic and acidic residues) spans 198-208; it reads PEKGTEEEKEE.

It belongs to the bacterial ribosomal protein bL25 family. CTC subfamily. As to quaternary structure, part of the 50S ribosomal subunit; part of the 5S rRNA/L5/L18/L25 subcomplex. Contacts the 5S rRNA. Binds to the 5S rRNA independently of L5 and L18.

Its function is as follows. This is one of the proteins that binds to the 5S RNA in the ribosome where it forms part of the central protuberance. The protein is Large ribosomal subunit protein bL25 of Bacillus licheniformis (strain ATCC 14580 / DSM 13 / JCM 2505 / CCUG 7422 / NBRC 12200 / NCIMB 9375 / NCTC 10341 / NRRL NRS-1264 / Gibson 46).